A 553-amino-acid chain; its full sequence is Zinc finger protein 324A (553 aa).

The KRAB domain occupies 1-72; sequence MAFEDVAVYF…SGTDTTLSRT (72 aa). The Nuclear localization signal signature appears at 130–135; the sequence is PSRERK. Residues 186–221 are disordered; that stretch reads GRQPRTPERQKPCAQEVPGRTFGSAQDLEAAGGRGH. C2H2-type zinc fingers lie at residues 257 to 279, 285 to 307, 313 to 335, 341 to 363, 369 to 391, 397 to 419, 425 to 447, 453 to 475, and 481 to 503; these read FECRACSKVFVKSSDLLKHLRTH, YECAQCGKAFSQTSHLTQHQRIH, YACPVCGKAFRHSSSLVRHQRIH, FRCSECGKAFSHGSNLSQHRKIH, YACAQCGRRFCRNSHLIQHERTH, FVCALCGAAFSQGSSLFKHQRVH, FACPQCGRAFSHSSNLTQHQLLH, FRCVDCGKAFAKGAVLLSHRRIH, and FVCTQCGRAFRERPALFHHQRIH. Residues 502–553 are disordered; the sequence is IHTGEKTVRRSRASLHPQARSVAGASSEGAPAKETEPTPASGPAAVSQPAEV.

It belongs to the krueppel C2H2-type zinc-finger protein family. Expressed at high levels in the spleen, thymus, and PBMC, at low levels in the prostate, ovary, small intestine, colon (mucosal lining), placenta, lung, and pancreas, and very weakly expressed in the liver and kidney.

Its subcellular location is the nucleus. Its function is as follows. May be involved in transcriptional regulation. May be involved in regulation of cell proliferation. This chain is Zinc finger protein 324A (ZNF324), found in Homo sapiens (Human).